The sequence spans 400 residues: Renin (400 aa).

The N-terminal stretch at 1 to 23 is a signal peptide; sequence MDAWRGMPRWGLLLLLWGSCTFG. The propeptide at 24–60 is activation peptide; sequence LPTETTTFKRISLKRMPSIRESLKERGVDMARLGPER. Asparagine 65 carries N-linked (GlcNAc...) asparagine glycosylation. Residues 80–397 enclose the Peptidase A1 domain; the sequence is YYGEIGIGTP…DRGNNRIGFA (318 aa). Aspartate 98 is an active-site residue. The cysteines at positions 111 and 118 are disulfide-linked. N-linked (GlcNAc...) asparagine glycosylation occurs at asparagine 135. Cysteines 277 and 281 form a disulfide. Aspartate 286 is a catalytic residue. Cysteine 319 and cysteine 356 are joined by a disulfide.

It belongs to the peptidase A1 family. Interacts with ATP6AP2.

It localises to the secreted. Its subcellular location is the membrane. The catalysed reaction is Cleavage of Leu-|-Xaa bond in angiotensinogen to generate angiotensin I.. Its activity is regulated as follows. Interaction with ATP6AP2 results in a 5-fold increased efficiency in angiotensinogen processing. In terms of biological role, renin is a highly specific endopeptidase, whose only known function is to generate angiotensin I from angiotensinogen in the plasma, initiating a cascade of reactions that produce an elevation of blood pressure and increased sodium retention by the kidney. In Callithrix jacchus (White-tufted-ear marmoset), this protein is Renin (REN).